Consider the following 295-residue polypeptide: Sulfotransferase 1A1 (295 aa).

48–53 (KSGTTW) serves as a coordination point for 3'-phosphoadenylyl sulfate. 106–108 (KTH) is a substrate binding site. The active-site Proton acceptor is the histidine 108. Residues arginine 130, serine 138, tyrosine 193, 227-232 (TSFKEM), and 255-259 (FMRKG) contribute to the 3'-phosphoadenylyl sulfate site. Serine 138 carries the phosphoserine modification.

The protein belongs to the sulfotransferase 1 family. Homodimer. Ubiquitously expressed in canine tissues with highest expression in male and female liver.

Its subcellular location is the cytoplasm. It carries out the reaction a phenol + 3'-phosphoadenylyl sulfate = an aryl sulfate + adenosine 3',5'-bisphosphate + H(+). The enzyme catalyses 17beta-estradiol + 3'-phosphoadenylyl sulfate = 17beta-estradiol 3-sulfate + adenosine 3',5'-bisphosphate + H(+). The catalysed reaction is 4-ethylphenol + 3'-phosphoadenylyl sulfate = 4-ethylphenyl sulfate + adenosine 3',5'-bisphosphate + H(+). It catalyses the reaction 4-nitrophenol + 3'-phosphoadenylyl sulfate = 4-nitrophenyl sulfate + adenosine 3',5'-bisphosphate. It carries out the reaction dopamine + 3'-phosphoadenylyl sulfate = dopamine 3-O-sulfate + adenosine 3',5'-bisphosphate + H(+). The enzyme catalyses dopamine + 3'-phosphoadenylyl sulfate = dopamine 4-O-sulfate + adenosine 3',5'-bisphosphate + H(+). The catalysed reaction is 3,3',5-triiodo-L-thyronine + 3'-phosphoadenylyl sulfate = 3,3',5-triiodo-L-thyronine sulfate + adenosine 3',5'-bisphosphate + H(+). It catalyses the reaction 3,3',5'-triiodo-L-thyronine + 3'-phosphoadenylyl sulfate = 3,3',5'-triiodo-L-thyronine sulfate + adenosine 3',5'-bisphosphate + H(+). It carries out the reaction 3,3'-diiodo-L-thyronine + 3'-phosphoadenylyl sulfate = 3,3'-diiodo-L-thyronine sulfate + adenosine 3',5'-bisphosphate + H(+). The enzyme catalyses L-thyroxine + 3'-phosphoadenylyl sulfate = L-thyroxine sulfate + adenosine 3',5'-bisphosphate + H(+). Functionally, sulfotransferase that utilizes 3'-phospho-5'-adenylyl sulfate (PAPS) as sulfonate donor to catalyze the sulfate conjugation of a wide variety of acceptor molecules bearing a hydroxyl or an amine group. Sulfonation increases the water solubility of most compounds, and therefore their renal excretion, but it can also result in bioactivation to form active metabolites. Displays broad substrate specificity for small phenolic compounds. Plays an important role in the sulfonation of endogenous molecules such as steroid hormones. Mediates also the metabolic activation of carcinogenic N-hydroxyarylamines leading to highly reactive intermediates capable of forming DNA adducts, potentially resulting in mutagenesis. May play a role in gut microbiota-host metabolic interaction. O-sulfonates 4-ethylphenol (4-EP), a dietary tyrosine-derived metabolite produced by gut bacteria. The product 4-EPS crosses the blood-brain barrier and may negatively regulate oligodendrocyte maturation and myelination, affecting the functional connectivity of different brain regions associated with the limbic system. Catalyzes the sulfate conjugation of dopamine. Catalyzes the sulfation of T4 (L-thyroxine/3,5,3',5'-tetraiodothyronine), T3 (3,5,3'-triiodothyronine), rT3 (3,3',5'-triiodothyronine) and 3,3'-T2 (3,3'-diiodothyronine), with a substrate preference of 3,3'-T2 &gt; rT3 &gt; T3 &gt; T4. This is Sulfotransferase 1A1 (SULT1A1) from Canis lupus familiaris (Dog).